The primary structure comprises 327 residues: COP9 signalosome complex subunit 6 (327 aa).

The MPN domain maps to 41 to 174 (VALHPLVILN…VSVFESVIDI (134 aa)). The interval 211–327 (SGENSTVAEH…IGRRMRGLFF (117 aa)) is interaction with Vpr.

It belongs to the peptidase M67A family. CSN6 subfamily. As to quaternary structure, component of the CSN complex, composed of COPS1/GPS1, COPS2, COPS3, COPS4, COPS5, COPS6, COPS7 (COPS7A or COPS7B), COPS8 and COPS9 isoform 1. In the complex, it probably interacts directly with COPS2, COPS4, COPS5, COPS7 (COPS7A or COPS7B) and COPS9 isoform 1. Interacts with the translation initiation factor EIF3S6. Interacts weakly with RBX1. Directly interacts with COP1 and 14-3-3 protein sigma/SFN. Interacts with ERCC6. In terms of assembly, (Microbial infection) Interacts with the HIV-1 protein Vpr. Widely expressed.

Its subcellular location is the nucleus. The protein localises to the cytoplasm. The protein resides in the perinuclear region. Functionally, component of the COP9 signalosome complex (CSN), a complex involved in various cellular and developmental processes. The CSN complex is an essential regulator of the ubiquitin (Ubl) conjugation pathway by mediating the deneddylation of the cullin subunits of SCF-type E3 ligase complexes, leading to decrease the Ubl ligase activity of SCF-type complexes such as SCF, CSA or DDB2. The complex is also involved in phosphorylation of p53/TP53, c-jun/JUN, IkappaBalpha/NFKBIA, ITPK1 and IRF8, possibly via its association with CK2 and PKD kinases. CSN-dependent phosphorylation of TP53 and JUN promotes and protects degradation by the Ubl system, respectively. Has some glucocorticoid receptor-responsive activity. Stabilizes COP1 through reducing COP1 auto-ubiquitination and decelerating COP1 turnover rate, hence regulates the ubiquitination of COP1 targets. The polypeptide is COP9 signalosome complex subunit 6 (COPS6) (Homo sapiens (Human)).